The following is a 747-amino-acid chain: Potassium transporter 20 (747 aa).

Topologically, residues 1–47 (MSVQEDDDAAGPEVDRLRRHDSFYGDAEKVSNDKSHGTGENWARTLQ) are cytoplasmic. The helical transmembrane segment at 48–68 (LAFQSIGVVYGDVGTSPLYVY) threads the bilayer. Over 69–84 (SSTFPDGVKHPDDLVG) the chain is Extracellular. Residues 85 to 105 (VLSLMLYTLILIPMVKYVFIV) traverse the membrane as a helical segment. Topologically, residues 106–171 (LYANDNGDGG…QKLESSNAAK (66 aa)) are cytoplasmic. A helical transmembrane segment spans residues 172 to 192 (IALFTITILGTSMVMGDGTLT). Topologically, residues 193-209 (PAISVLSAVSGIREKAP) are extracellular. The helical transmembrane segment at 210 to 230 (SLTQLQVVWISVPILIVLFSV) threads the bilayer. Residues 231–237 (QRFGTDK) are Cytoplasmic-facing. The helical transmembrane segment at 238 to 258 (VGYSFAPVISVWFVLIAGIGA) threads the bilayer. Over 259–288 (YNLAVHEITILRAFNPMYIIDYFRRNGKEA) the chain is Extracellular. A helical membrane pass occupies residues 289–309 (WVSLGGAVLCITGTEAMFADL). The Cytoplasmic portion of the chain corresponds to 310–318 (GHFNIRAIQ). A helical transmembrane segment spans residues 319 to 339 (LSFTCVLFPSVALCYMGQAAY). Residues 340-353 (LRKFPEDVGDTFYK) are Extracellular-facing. Residues 354-374 (SLPAPLFWPVFVVAIMAAIIA) form a helical membrane-spanning segment. Over 375-410 (SQAMLSGAFAILSKALPLGCFPRVEVVHTSNKYEGQ) the chain is Cytoplasmic. Residues 411-431 (VYIPEVNFLIGVASVAITVAF) form a helical membrane-spanning segment. The Extracellular portion of the chain corresponds to 432–442 (QTTANIGNAYG). The helical transmembrane segment at 443 to 463 (ICVVMVFSITTHLMTVVMLLI) threads the bilayer. Residues 464–469 (WKVRLP) lie on the Cytoplasmic side of the membrane. The helical transmembrane segment at 470–490 (FIAAFYVVFTFTEFLYLSSIL) threads the bilayer. Residues 491–496 (SKFAEG) lie on the Extracellular side of the membrane. The chain crosses the membrane as a helical span at residues 497–517 (GYLPFCFSLVLMALMATWHYV). Topologically, residues 518–747 (HVKRYWYELD…LLKVGITYEI (230 aa)) are cytoplasmic.

This sequence belongs to the HAK/KUP transporter (TC 2.A.72.3) family.

The protein resides in the membrane. In terms of biological role, high-affinity potassium transporter. The sequence is that of Potassium transporter 20 (HAK20) from Oryza sativa subsp. japonica (Rice).